The chain runs to 428 residues: Adenylosuccinate synthetase (428 aa).

Residues 11–17 and 39–41 contribute to the GTP site; these read GDEGKGK and GHT. Catalysis depends on Asp-12, which acts as the Proton acceptor. Residues Asp-12 and Gly-39 each contribute to the Mg(2+) site. IMP is bound by residues 12 to 15, 37 to 40, Thr-130, Arg-144, Asn-226, Thr-241, and Arg-305; these read DEGK and NAGH. The active-site Proton donor is the His-40. 301–307 provides a ligand contact to substrate; that stretch reads VTTGRKR. GTP is bound by residues Arg-307, 333-335, and 415-417; these read KLD and GTG.

It belongs to the adenylosuccinate synthetase family. In terms of assembly, homodimer. The cofactor is Mg(2+).

The protein resides in the cytoplasm. It catalyses the reaction IMP + L-aspartate + GTP = N(6)-(1,2-dicarboxyethyl)-AMP + GDP + phosphate + 2 H(+). It functions in the pathway purine metabolism; AMP biosynthesis via de novo pathway; AMP from IMP: step 1/2. Plays an important role in the de novo pathway and in the salvage pathway of purine nucleotide biosynthesis. Catalyzes the first committed step in the biosynthesis of AMP from IMP. This Candida albicans (strain SC5314 / ATCC MYA-2876) (Yeast) protein is Adenylosuccinate synthetase.